A 343-amino-acid polypeptide reads, in one-letter code: Ferredoxin--NADP reductase (343 aa).

Positions 36, 44, 49, 89, 124, 289, and 330 each coordinate FAD.

It belongs to the ferredoxin--NADP reductase type 2 family. As to quaternary structure, homodimer. FAD serves as cofactor.

The enzyme catalyses 2 reduced [2Fe-2S]-[ferredoxin] + NADP(+) + H(+) = 2 oxidized [2Fe-2S]-[ferredoxin] + NADPH. This chain is Ferredoxin--NADP reductase, found in Mesorhizobium japonicum (strain LMG 29417 / CECT 9101 / MAFF 303099) (Mesorhizobium loti (strain MAFF 303099)).